Reading from the N-terminus, the 64-residue chain is Large ribosomal subunit protein bL33c (64 aa).

It belongs to the bacterial ribosomal protein bL33 family.

It is found in the plastid. The protein resides in the chloroplast. This chain is Large ribosomal subunit protein bL33c, found in Thalassiosira pseudonana (Marine diatom).